A 314-amino-acid polypeptide reads, in one-letter code: MSVGADRKKTGTSLTGKVVAAYGRHFEVEVAGGTIYSCVVRGKKKGVVCGDEVEILPATGDQGIIETTLPRTSLFYRSEIFREKLIAANATQLVFVLAVVPSCNLELLDRCLVAAESQGIRPLILLNKIDLIGQDEQRQAVAHHLMFYRELGYPVLEISAKISVQPLIPLLSGQTSLLAGQSGVGKSTLLNALVPRAQQATAEISDALDSGRHTTTHVRLFHFDADSSIIDSPGFQEFGLQQLDEASLARGFIEFRPFLGQCKFRDCRHIAEPGCKLLLAAQEGMLNSRRIACYHKLVKGLKKSHPWMETNKRV.

Positions 78-238 constitute a CP-type G domain; it reads SEIFREKLIA…IIDSPGFQEF (161 aa). GTP contacts are provided by residues 127-130 and 180-188; these read NKID and GQSGVGKST. Zn(2+) is bound by residues Cys262, Cys267, His269, and Cys275.

The protein belongs to the TRAFAC class YlqF/YawG GTPase family. RsgA subfamily. As to quaternary structure, monomer. Associates with 30S ribosomal subunit, binds 16S rRNA. Requires Zn(2+) as cofactor.

Its subcellular location is the cytoplasm. Its function is as follows. One of several proteins that assist in the late maturation steps of the functional core of the 30S ribosomal subunit. Helps release RbfA from mature subunits. May play a role in the assembly of ribosomal proteins into the subunit. Circularly permuted GTPase that catalyzes slow GTP hydrolysis, GTPase activity is stimulated by the 30S ribosomal subunit. In Nitrosomonas europaea (strain ATCC 19718 / CIP 103999 / KCTC 2705 / NBRC 14298), this protein is Small ribosomal subunit biogenesis GTPase RsgA.